Consider the following 493-residue polypeptide: Hexokinase-like 1 protein (493 aa).

The region spanning 38–488 (ASTCPILTKF…SGLGAALLAA (451 aa)) is the Hexokinase domain. A hexokinase small subdomain region spans residues 93 to 232 (SGNEEGLFYA…GLDMRVSALV (140 aa)). Gly-107, Thr-108, and Asn-109 together coordinate ADP. D-glucose-binding residues include Thr-198, Lys-199, Asn-233, and Asp-234. The tract at residues 233–477 (NDGVGTLAGA…SHVAIKHTKD (245 aa)) is hexokinase large subdomain. Thr-257 contributes to the ADP binding site. Residues Asn-260, Glu-287, and Glu-317 each coordinate D-glucose. Ala-442 is an ADP binding site.

It belongs to the hexokinase family.

It carries out the reaction a D-hexose + ATP = a D-hexose 6-phosphate + ADP + H(+). The catalysed reaction is D-fructose + ATP = D-fructose 6-phosphate + ADP + H(+). It catalyses the reaction D-glucose + ATP = D-glucose 6-phosphate + ADP + H(+). The protein operates within carbohydrate metabolism; hexose metabolism. It functions in the pathway carbohydrate degradation; glycolysis; D-glyceraldehyde 3-phosphate and glycerone phosphate from D-glucose: step 1/4. Its function is as follows. Fructose and glucose phosphorylating enzyme. The chain is Hexokinase-like 1 protein from Arabidopsis thaliana (Mouse-ear cress).